The sequence spans 383 residues: Na(+)/H(+) antiporter NhaA (383 aa).

Transmembrane regions (helical) follow at residues 10-30, 56-76, 91-111, 121-141, 150-170, 174-194, 206-226, 254-274, 289-308, 327-347, and 355-375; these read LIGG…NNSP, LMHW…GLEI, IITP…IYLS, GWAI…ALLG, LLVI…IAIF, SLSL…IICN, VVLG…ATLA, PWII…ISFS, IIWG…LAVF, GISL…VLAF, and AIKI…YIVL.

It belongs to the NhaA Na(+)/H(+) (TC 2.A.33) antiporter family.

It localises to the cell inner membrane. It catalyses the reaction Na(+)(in) + 2 H(+)(out) = Na(+)(out) + 2 H(+)(in). Its function is as follows. Na(+)/H(+) antiporter that extrudes sodium in exchange for external protons. The sequence is that of Na(+)/H(+) antiporter NhaA from Francisella tularensis subsp. tularensis (strain WY96-3418).